Here is a 539-residue protein sequence, read N- to C-terminus: Acid-sensing ion channel 4 (539 aa).

The Cytoplasmic portion of the chain corresponds to 1-68 (MPIEIVCKIK…GPGPHGLRRT (68 aa)). Residues 69–89 (LWVLALLTSLAAFLYQAASLA) form a helical membrane-spanning segment. The Extracellular portion of the chain corresponds to 90–438 (RGYLTRPHLV…EQRAAYGLSA (349 aa)). 2 cysteine pairs are disulfide-bonded: Cys-118/Cys-202 and Cys-180/Cys-187. Residues Asn-191, Asn-243, Asn-341, and Asn-376 are each glycosylated (N-linked (GlcNAc...) asparagine). Cystine bridges form between Cys-296-Cys-375, Cys-318-Cys-371, Cys-322-Cys-369, Cys-331-Cys-353, and Cys-333-Cys-345. The helical transmembrane segment at 439-459 (LLGDLGGQMGLFIGASILTLL) threads the bilayer. The GAS motif; ion selectivity filter motif lies at 452 to 454 (GAS). The Cytoplasmic portion of the chain corresponds to 460–539 (EILDYIYEVS…PGSLFEDFAC (80 aa)). The interval 501 to 531 (EQSPCPNRGRAEGGGASNLLPNHHHPHGPPG) is disordered.

The protein belongs to the amiloride-sensitive sodium channel (TC 1.A.6) family. ASIC4 subfamily. As to quaternary structure, homotrimer. Heterotrimer; with other ASIC proteins producing functional channels. In terms of tissue distribution, expressed in brain, spinal cord and dorsal root ganglion (DRG). Expressed by a subset of sensory neurons in the DRG. Expressed by granule cells in the cerebellar cortex. In hippocampus, expression is detected in dentate gyrus granule cells, in pyramidal cells of CA1-CA3 subfields and in interneurons of the striatum oriens and radiatum of all subfields. In cerebral cortex expressed in small, medium and large pyramidal cells in layers 2, 3 and 5 respectively. Also expressed in striatum, globus pallidus, inferior and superior calliculi, amygdala, magnocellular preoptic nucleus, islands of Calleja and large neurons of olfactory tubercules.

It is found in the cell membrane. Functionally, does not exhibit measurable stand-alone pH-gated sodium channel activity but may form pH-gated heterotrimeric sodium channels. Its activity could also depend on alternative gating mechanisms. In Rattus norvegicus (Rat), this protein is Acid-sensing ion channel 4.